Consider the following 901-residue polypeptide: HTH-type transcriptional regulator MalT (901 aa).

39–46 (SPAGYGKT) serves as a coordination point for ATP. The HTH luxR-type domain occupies 829–894 (ELIRTSPLTQ…DAVQHAQQLL (66 aa)). A DNA-binding region (H-T-H motif) is located at residues 853–872 (NEQIAGELAVAATTIKTHIR).

The protein belongs to the MalT family. Monomer in solution. Oligomerizes to an active state in the presence of the positive effectors ATP and maltotriose.

Its activity is regulated as follows. Activated by ATP and maltotriose, which are both required for DNA binding. Its function is as follows. Positively regulates the transcription of the maltose regulon whose gene products are responsible for uptake and catabolism of malto-oligosaccharides. Specifically binds to the promoter region of its target genes, recognizing a short DNA motif called the MalT box. The chain is HTH-type transcriptional regulator MalT from Salmonella agona (strain SL483).